The following is a 513-amino-acid chain: ATP synthase subunit alpha (513 aa).

169 to 176 serves as a coordination point for ATP; sequence GDRQTGKT.

Belongs to the ATPase alpha/beta chains family. F-type ATPases have 2 components, CF(1) - the catalytic core - and CF(0) - the membrane proton channel. CF(1) has five subunits: alpha(3), beta(3), gamma(1), delta(1), epsilon(1). CF(0) has three main subunits: a(1), b(2) and c(9-12). The alpha and beta chains form an alternating ring which encloses part of the gamma chain. CF(1) is attached to CF(0) by a central stalk formed by the gamma and epsilon chains, while a peripheral stalk is formed by the delta and b chains.

The protein resides in the cell inner membrane. The catalysed reaction is ATP + H2O + 4 H(+)(in) = ADP + phosphate + 5 H(+)(out). In terms of biological role, produces ATP from ADP in the presence of a proton gradient across the membrane. The alpha chain is a regulatory subunit. The chain is ATP synthase subunit alpha from Citrobacter koseri (strain ATCC BAA-895 / CDC 4225-83 / SGSC4696).